The primary structure comprises 702 residues: MKSMLEKINQLRDVLKHHEYLYHVNDAPEITDAEYDALLEKLREWESQYPELMNPDSPTQKVGASPSTAFKPVTHQVPMLSLDNVFDEKGFLAFNKRVSERLEAESSAQKASLNPLVRDSDQKNRSEKNVQEALTFCCELKLDGLAVSLIYEKGELTQAATRGNGFQGENITHNIRTIQSIPLRLKGKALPQRIEIRGEVYMPQAGFEKLNKQARANHEKIFSNPRNAAAGSLRQLDPHITAQRPLNFFCYGVGLLEGGVLPQSHIQRLMQLKAWGLPVHDRITLCTGAEQVMAFYQEIAQARATLGFDIDGIVIKVDDVLLQEKLGFLAKAPRWATAFKFPAQEKTTQVLGVEFQVGRTGALTPVARLEPVELGGALVSNANLHNADEIARLGLRIGDTVVVRRAGDVIPQIVNVIIESRPQNTVEIIFPHHCPICKSVAKRIEGEAVIRCTGGLFCPAQRKEALKHFVARRALDIEGLGDKIIHQLVDKKYVQNPADLFHLTSEKLLSLKRMREKSAQNLLNSLKKSQKTTFARFLYALGIREVGETTAANLALYFGQLDLLRKADIETLKKVPDVGEVVAKNLVDFFGNEHHQQVISALESVLDWPDPEPIEKPNHPFRDKTVVLTGSLNAFTRDDLKAHLISLGAKVSGSVSKKTDFLIAGENPGSKAQKAEKSGIKIMNEPELIEFLKALKPEGTKV.

Residues 32 to 36 (DAEYD) and 81 to 82 (SL) each bind NAD(+). The interval 104-125 (AESSAQKASLNPLVRDSDQKNR) is disordered. Residue glutamate 139 participates in NAD(+) binding. The active-site N6-AMP-lysine intermediate is lysine 141. The NAD(+) site is built by arginine 162, glutamate 199, lysine 316, and lysine 340. Residues cysteine 434, cysteine 437, cysteine 452, and cysteine 458 each contribute to the Zn(2+) site. A BRCT domain is found at 616–702 (KPNHPFRDKT…KALKPEGTKV (87 aa)).

Belongs to the NAD-dependent DNA ligase family. LigA subfamily. The cofactor is Mg(2+). It depends on Mn(2+) as a cofactor.

It carries out the reaction NAD(+) + (deoxyribonucleotide)n-3'-hydroxyl + 5'-phospho-(deoxyribonucleotide)m = (deoxyribonucleotide)n+m + AMP + beta-nicotinamide D-nucleotide.. Functionally, DNA ligase that catalyzes the formation of phosphodiester linkages between 5'-phosphoryl and 3'-hydroxyl groups in double-stranded DNA using NAD as a coenzyme and as the energy source for the reaction. It is essential for DNA replication and repair of damaged DNA. In Hamiltonella defensa subsp. Acyrthosiphon pisum (strain 5AT), this protein is DNA ligase.